A 207-amino-acid polypeptide reads, in one-letter code: Small ribosomal subunit protein uS4 (207 aa).

Residues 22 to 54 are disordered; that stretch reads KSARRSISDKSKFESKPGQHGRTSGSRTSDFGL. Over residues 27–38 the composition is skewed to basic and acidic residues; the sequence is SISDKSKFESKP. The span at 42-52 shows a compositional bias: polar residues; sequence GRTSGSRTSDF. An S4 RNA-binding domain is found at 97–157; that stretch reads SRLDNVVYRM…EKSKKQLRII (61 aa).

It belongs to the universal ribosomal protein uS4 family. In terms of assembly, part of the 30S ribosomal subunit. Contacts protein S5. The interaction surface between S4 and S5 is involved in control of translational fidelity.

In terms of biological role, one of the primary rRNA binding proteins, it binds directly to 16S rRNA where it nucleates assembly of the body of the 30S subunit. Its function is as follows. With S5 and S12 plays an important role in translational accuracy. The protein is Small ribosomal subunit protein uS4 of Leptothrix cholodnii (strain ATCC 51168 / LMG 8142 / SP-6) (Leptothrix discophora (strain SP-6)).